A 138-amino-acid chain; its full sequence is Putative pre-16S rRNA nuclease (138 aa).

Belongs to the YqgF nuclease family.

It is found in the cytoplasm. In terms of biological role, could be a nuclease involved in processing of the 5'-end of pre-16S rRNA. The polypeptide is Putative pre-16S rRNA nuclease (Glaesserella parasuis serovar 5 (strain SH0165) (Haemophilus parasuis)).